The following is a 134-amino-acid chain: Putative pre-16S rRNA nuclease (134 aa).

This sequence belongs to the YqgF nuclease family.

Its subcellular location is the cytoplasm. Functionally, could be a nuclease involved in processing of the 5'-end of pre-16S rRNA. This is Putative pre-16S rRNA nuclease from Helicobacter pylori (strain J99 / ATCC 700824) (Campylobacter pylori J99).